The chain runs to 231 residues: Aquaporin Z (231 aa).

2 helical membrane-spanning segments follow: residues Leu-9 to Phe-29 and Ile-34 to Val-54. The NPA 1 signature appears at Asn-63 to Ala-65. The next 3 membrane-spanning stretches (helical) occupy residues Ile-82–Ile-102, Ser-133–Thr-153, and Gly-160–Ile-180. Residues Asn-186 to Ala-188 carry the NPA 2 motif. A helical transmembrane segment spans residues Leu-202–Ile-222.

Belongs to the MIP/aquaporin (TC 1.A.8) family. In terms of assembly, homotetramer.

The protein localises to the cell inner membrane. The enzyme catalyses H2O(in) = H2O(out). Channel that permits osmotically driven movement of water in both directions. It is involved in the osmoregulation and in the maintenance of cell turgor during volume expansion in rapidly growing cells. It mediates rapid entry or exit of water in response to abrupt changes in osmolarity. The sequence is that of Aquaporin Z from Photorhabdus laumondii subsp. laumondii (strain DSM 15139 / CIP 105565 / TT01) (Photorhabdus luminescens subsp. laumondii).